Consider the following 204-residue polypeptide: Recombination protein RecR (204 aa).

A C4-type zinc finger spans residues 61 to 76 (CARCNTFSETQICSTC). A Toprim domain is found at 84–183 (SLLCIVETPA…KVTRIARGIP (100 aa)).

Belongs to the RecR family.

May play a role in DNA repair. It seems to be involved in an RecBC-independent recombinational process of DNA repair. It may act with RecF and RecO. This Polynucleobacter asymbioticus (strain DSM 18221 / CIP 109841 / QLW-P1DMWA-1) (Polynucleobacter necessarius subsp. asymbioticus) protein is Recombination protein RecR.